The sequence spans 319 residues: Transmembrane and ubiquitin-like domain-containing protein 2 (319 aa).

Residues 36–56 form a helical membrane-spanning segment; that stretch reads VMVVAGVVALTLALVLAWLST. Disordered stretches follow at residues 88 to 128 and 145 to 165; these read VNQG…ARGE and RQAG…DGSC. The span at 95 to 111 shows a compositional bias: basic and acidic residues; it reads PTEHPHPSGGNDDKAEE. The Ubiquitin-like domain occupies 173–246; it reads INVRLKFLND…IHCHRSPPGA (74 aa). Helical transmembrane passes span 264 to 284 and 298 to 318; these read LGVN…GVVW and ATIS…GMYG.

Its subcellular location is the membrane. In Mus musculus (Mouse), this protein is Transmembrane and ubiquitin-like domain-containing protein 2 (Tmub2).